A 209-amino-acid polypeptide reads, in one-letter code: Large ribosomal subunit protein uL3 (209 aa).

The protein belongs to the universal ribosomal protein uL3 family. As to quaternary structure, part of the 50S ribosomal subunit. Forms a cluster with proteins L14 and L19.

One of the primary rRNA binding proteins, it binds directly near the 3'-end of the 23S rRNA, where it nucleates assembly of the 50S subunit. The sequence is that of Large ribosomal subunit protein uL3 from Clostridium botulinum (strain Okra / Type B1).